The sequence spans 573 residues: Glucocorticoid modulatory element-binding protein 1 (573 aa).

At A2 the chain carries N-acetylalanine. In terms of domain architecture, SAND spans 82 to 166 (TGTIEANEDM…RKMMDSGQID (85 aa)). C113 contacts Zn(2+). Residues K139, K143, K146, and R157 each contribute to the DNA site. Zn(2+)-binding residues include H170, C174, and C178. A coiled-coil region spans residues 321-367 (LDNRRNQVEQGEEQFLYTLTDLERQLEEQKKQGQDHRLKSQTVQNVV). The segment at 370–398 (PVSTPKPPKRPRLQRPASTTVLSPSPPVQ) is disordered.

As to quaternary structure, homodimer, and heterodimer of GMEB1 and GMEB2. GMEB1 and GMEB2 form the parvovirus initiator complex (PIF). Interacts with the glucocorticoid receptor (NR3C1) and NCOA2/TIF2. May interact with HSP27 and CREB-binding protein (CBP).

The protein localises to the nucleus. It localises to the cytoplasm. Trans-acting factor that binds to glucocorticoid modulatory elements (GME) present in the TAT (tyrosine aminotransferase) promoter and increases sensitivity to low concentrations of glucocorticoids. Also binds to the transferrin receptor promoter. Essential auxiliary factor for the replication of parvoviruses. This Homo sapiens (Human) protein is Glucocorticoid modulatory element-binding protein 1 (GMEB1).